The sequence spans 233 residues: MSQDSFKQYLLSEFNIQFNNETLLLEALTQRNYLNEHPDEPGRDYQRLEFLGDSVMQVSVAEYLFKRYPNWHEGQLTEMRIAMVQTRSFAHFSRVAHLNEGIRLGKGEEMSGARDRDSLLEDIWEAFIGALYLDQGFEAVRKFLDQTLFAAVDTDFFDRFIDFKSRLQEKLQKNGAVDIDYRTENEQQLSHNAQLFEASVSVDDHELARGTGKSIKDAEKAAARAALKLLEEK.

An RNase III domain is found at 7–136 (KQYLLSEFNI…FIGALYLDQG (130 aa)). E49 is a binding site for Mg(2+). The active site involves D53. Positions 122 and 125 each coordinate Mg(2+). Residue E125 is part of the active site. The 71-residue stretch at 162–232 (DFKSRLQEKL…ARAALKLLEE (71 aa)) folds into the DRBM domain.

This sequence belongs to the ribonuclease III family. In terms of assembly, homodimer. Mg(2+) serves as cofactor.

It is found in the cytoplasm. The catalysed reaction is Endonucleolytic cleavage to 5'-phosphomonoester.. Digests double-stranded RNA. Involved in the processing of primary rRNA transcript to yield the immediate precursors to the large and small rRNAs (23S and 16S). Processes some mRNAs, and tRNAs when they are encoded in the rRNA operon. Processes pre-crRNA and tracrRNA of type II CRISPR loci if present in the organism. The protein is Ribonuclease 3 of Leuconostoc citreum (strain KM20).